The following is a 456-amino-acid chain: uncharacterized protein (456 aa).

In terms of domain architecture, TRAM spans 5–63 (LVKKGQQISLKIKRLGINGEGIGYYKKLIIFVPGALPKEEVTATITNVTPKFAEGTLQS). The [4Fe-4S] cluster site is built by Cys-76, Cys-82, Cys-85, and Cys-165. Gln-289, Tyr-318, Asp-339, and Asp-387 together coordinate S-adenosyl-L-methionine. Cys-414 serves as the catalytic Nucleophile.

It belongs to the class I-like SAM-binding methyltransferase superfamily. RNA M5U methyltransferase family.

This is an uncharacterized protein from Enterococcus faecalis (strain ATCC 700802 / V583).